The chain runs to 537 residues: Periplasmic murein peptide-binding protein MppA (537 aa).

The first 22 residues, 1 to 22 (MKHSVSVTCCALLVSSISLSYA), serve as a signal peptide directing secretion. Lysine 42, valine 54, leucine 56, glutamine 289, arginine 424, serine 435, valine 437, aspartate 439, and threonine 506 together coordinate L-alanyl-gamma-D-glutamyl-meso-2,6-diaminopimelate.

The protein belongs to the bacterial solute-binding protein 5 family. In terms of assembly, the complex is composed of two ATP-binding proteins (OppD and OppF), two transmembrane proteins (OppB and OppC) and a solute-binding protein (MppA).

It is found in the periplasm. Its function is as follows. Part of the ABC transporter complex MppA-OppBCDF involved in the uptake of the cell wall murein tripeptide L-alanyl-gamma-D-glutamyl-meso-diaminopimelate. Is involved in the recycling of cell wall peptides. Binds the cell wall peptide L-Ala-D-Gly-gamma-meso-diaminopimelic acid. Can also transport ordinary alpha-linked tripeptides such as Pro-Phe-Lys, but with much lower efficiency than OppA. Cannot bind typical tripeptides such as Lys-Glu-Lys, Lys-Lys-Lys or Ala-Ala-Ala. The protein is Periplasmic murein peptide-binding protein MppA of Escherichia coli (strain K12).